Consider the following 312-residue polypeptide: Methionyl-tRNA formyltransferase (312 aa).

113–116 serves as a coordination point for (6S)-5,6,7,8-tetrahydrofolate; sequence SLLP.

The protein belongs to the Fmt family.

The enzyme catalyses L-methionyl-tRNA(fMet) + (6R)-10-formyltetrahydrofolate = N-formyl-L-methionyl-tRNA(fMet) + (6S)-5,6,7,8-tetrahydrofolate + H(+). In terms of biological role, attaches a formyl group to the free amino group of methionyl-tRNA(fMet). The formyl group appears to play a dual role in the initiator identity of N-formylmethionyl-tRNA by promoting its recognition by IF2 and preventing the misappropriation of this tRNA by the elongation apparatus. This is Methionyl-tRNA formyltransferase from Francisella philomiragia subsp. philomiragia (strain ATCC 25017 / CCUG 19701 / FSC 153 / O#319-036).